Reading from the N-terminus, the 162-residue chain is MLAPIPEPKPGDLIEIFRPMYRHWAIYVGDGYVIHLAPPSEIAGAGAASIMSALTDKAIVKKELLCHVAGKDKYQVNNKHDEEYTPLPLSKIIQRAERLVGQEVLYRLTSENCEHFVNELRYGVPRSDQVRDAVKAVGIAGVGLAALGLVGVMLSRNKKQKQ.

Topologically, residues 1 to 133 (MLAPIPEPKP…VPRSDQVRDA (133 aa)) are cytoplasmic. The LRAT domain occupies 13–129 (LIEIFRPMYR…LRYGVPRSDQ (117 aa)). Residues His-23 and His-35 contribute to the active site. Residue Cys-113 is the Acyl-thioester intermediate of the active site. Residues 134–154 (VKAVGIAGVGLAALGLVGVML) traverse the membrane as a helical segment. The Lumenal portion of the chain corresponds to 155–162 (SRNKKQKQ).

It belongs to the H-rev107 family. Interacts with PPP2R1A; this interaction might decrease PP2A activity. In terms of tissue distribution, ubiquitously expressed in normal tissues but down-regulated in primary carcinomas or in many cell lines derived from tumors. Highly expressed in white adipose tissue and in adipocytes. Expressed at lower levels in brown adipose tissue.

The protein localises to the cell membrane. The protein resides in the cytoplasm. It localises to the cytosol. It is found in the perinuclear region. Its subcellular location is the peroxisome membrane. The protein localises to the mitochondrion membrane. The protein resides in the nucleus envelope. It localises to the lysosome membrane. It is found in the endoplasmic reticulum membrane. It catalyses the reaction a 1,2-diacyl-sn-glycero-3-phosphocholine + H2O = a 1-acyl-sn-glycero-3-phosphocholine + a fatty acid + H(+). It carries out the reaction a 1,2-diacyl-sn-glycero-3-phosphocholine + H2O = a 2-acyl-sn-glycero-3-phosphocholine + a fatty acid + H(+). The enzyme catalyses 1,2-dihexadecanoyl-sn-glycero-3-phosphocholine + H2O = 1-hexadecanoyl-sn-glycero-3-phosphocholine + hexadecanoate + H(+). The catalysed reaction is 1,2-dihexadecanoyl-sn-glycero-3-phosphocholine + H2O = 2-hexadecanoyl-sn-glycero-3-phosphocholine + hexadecanoate + H(+). It catalyses the reaction 1-hexadecanoyl-2-(9Z-octadecenoyl)-sn-glycero-3-phosphocholine + H2O = 2-(9Z-octadecenoyl)-sn-glycero-3-phosphocholine + hexadecanoate + H(+). It carries out the reaction 1-hexadecanoyl-2-(9Z-octadecenoyl)-sn-glycero-3-phosphocholine + H2O = 1-hexadecanoyl-sn-glycero-3-phosphocholine + (9Z)-octadecenoate + H(+). The enzyme catalyses 1-hexadecanoyl-2-(5Z,8Z,11Z,14Z-eicosatetraenoyl)-sn-glycero-3-phosphocholine + H2O = 1-hexadecanoyl-sn-glycero-3-phosphocholine + (5Z,8Z,11Z,14Z)-eicosatetraenoate + H(+). The catalysed reaction is 1-hexadecanoyl-2-(5Z,8Z,11Z,14Z-eicosatetraenoyl)-sn-glycero-3-phosphocholine + H2O = 2-(5Z,8Z,11Z,14Z)-eicosatetraenoyl-sn-glycero-3-phosphocholine + hexadecanoate + H(+). It catalyses the reaction 1-hexadecanoyl-2-(9Z,12Z-octadecadienoyl)-sn-glycero-3-phosphoethanolamine + H2O = 1-hexadecanoyl-sn-glycero-3-phosphoethanolamine + (9Z,12Z)-octadecadienoate + H(+). It carries out the reaction 1-hexadecanoyl-2-(9Z,12Z-octadecadienoyl)-sn-glycero-3-phosphoethanolamine + H2O = 2-(9Z,12Z)-octadecadienoyl-sn-glycero-3-phosphoethanolamine + hexadecanoate + H(+). The enzyme catalyses 1-hexadecanoyl-2-(5Z,8Z,11Z,14Z-eicosatetraenoyl)-sn-glycero-3-phosphoethanolamine + H2O = 1-hexadecanoyl-sn-glycero-3-phosphoethanolamine + (5Z,8Z,11Z,14Z)-eicosatetraenoate + H(+). The catalysed reaction is 1-hexadecanoyl-2-(5Z,8Z,11Z,14Z-eicosatetraenoyl)-sn-glycero-3-phosphoethanolamine + H2O = 2-(5Z,8Z,11Z,14Z)-eicosatetraenoyl-sn-glycero-3-phosphoethanolamine + hexadecanoate + H(+). It catalyses the reaction 1-hexanoyl-2-acyl-sn-glycero-3-phosphocholine + H2O = hexanoate + a 2-acyl-sn-glycero-3-phosphocholine + H(+). It carries out the reaction 1-hexanoyl-2-acyl-sn-glycero-3-phosphocholine + H2O = 1-hexanoyl-sn-glycero-3-phosphocholine + a fatty acid + H(+). The enzyme catalyses 1,2-diheptadecanoyl-sn-glycero-3-phosphoethanolamine + 1-(9Z-octadecenoyl)-2-hexadecanoyl-sn-glycero-3-phosphocholine = 1,2-diheptadecanoyl-sn-glycero-3-phospho-N-hexadecanoyl-ethanolamine + 1-(9Z-octadecenoyl)-sn-glycero-3-phosphocholine + H(+). The catalysed reaction is 1,2-diheptadecanoyl-sn-glycero-3-phosphoethanolamine + 1-(9Z-octadecenoyl)-2-hexadecanoyl-sn-glycero-3-phosphocholine = 1,2-diheptadecanoyl-sn-glycero-3-phospho-N-(9Z-octadecenoyl)-ethanolamine + 2-hexadecanoyl-sn-glycero-3-phosphocholine + H(+). It catalyses the reaction 1,2-dihexanoyl-sn-glycero-3-phosphoethanolamine + 2-heptanoyl-sn-glycero-3-phosphocholine = hexanoyl-sn-glycero-3-phosphoethanolamine + 1-hexanoyl-2-heptanoyl-sn-glycero-3-phosphocholine. It carries out the reaction 1-hexadecanoyl-2-octadecanoyl-sn-glycero-3-phosphocholine + H2O = octadecanoate + 1-hexadecanoyl-sn-glycero-3-phosphocholine + H(+). The enzyme catalyses 1-hexadecanoyl-2-octadecanoyl-sn-glycero-3-phosphocholine + H2O = 2-octadecanoyl-sn-glycero-3-phosphocholine + hexadecanoate + H(+). The catalysed reaction is 1-octadecanoyl-2-hexadecanoyl-sn-glycero-3-phosphocholine + H2O = 1-octadecanoyl-sn-glycero-3-phosphocholine + hexadecanoate + H(+). It catalyses the reaction 1-octadecanoyl-2-hexadecanoyl-sn-glycero-3-phosphocholine + H2O = 2-hexadecanoyl-sn-glycero-3-phosphocholine + octadecanoate + H(+). It carries out the reaction 1-hexadecanoyl-2-(9Z,12Z-octadecadienoyl)-sn-glycero-3-phosphocholine + H2O = (9Z,12Z)-octadecadienoate + 1-hexadecanoyl-sn-glycero-3-phosphocholine + H(+). The enzyme catalyses 1-hexadecanoyl-2-(9Z,12Z-octadecadienoyl)-sn-glycero-3-phosphocholine + H2O = 2-(9Z,12Z-octadecadienoyl)-sn-glycero-3-phosphocholine + hexadecanoate + H(+). The catalysed reaction is 1,2-di-(9Z-octadecenoyl)-sn-glycero-3-phosphocholine + H2O = 2-(9Z-octadecenoyl)-sn-glycero-3-phosphocholine + (9Z)-octadecenoate + H(+). It catalyses the reaction 1,2-dihexadecanoyl-sn-glycero-3-phosphocholine + H2O = hexadecanoyl-sn-glycero-3-phosphocholine + hexadecanoate + H(+). It carries out the reaction 1,2-di-(9Z-octadecenoyl)-sn-glycero-3-phosphocholine + H2O = 1-(9Z-octadecenoyl)-sn-glycero-3-phosphocholine + (9Z)-octadecenoate + H(+). The enzyme catalyses 1,2-di-(9Z-octadecenoyl)-sn-glycero-3-phosphoethanolamine + 1,2-dihexadecanoyl-sn-glycero-3-phosphocholine = hexadecanoyl-sn-glycero-3-phosphocholine + N-hexadecanoyl-1,2-di-(9Z-octadecenoyl)-sn-glycero-3-phosphoethanolamine + H(+). The catalysed reaction is 1,2-di-(9Z,12Z-octadecadienoyl)-sn-glycero-3-phosphocholine + H2O = 1-(9Z,12Z)-octadecadienoyl-sn-glycero-3-phosphocholine + (9Z,12Z)-octadecadienoate + H(+). In terms of biological role, exhibits both phospholipase A1/2 and acyltransferase activities. Shows phospholipase A1 (PLA1) and A2 (PLA2), catalyzing the calcium-independent release of fatty acids from the sn-1 or sn-2 position of glycerophospholipids. For most substrates, PLA1 activity is much higher than PLA2 activity. Shows O-acyltransferase activity, catalyzing the transfer of a fatty acyl group from glycerophospholipid to the hydroxyl group of lysophospholipid. Shows N-acyltransferase activity,catalyzing the calcium-independent transfer of a fatty acyl group at the sn-1 position of phosphatidylcholine (PC) and other glycerophospholipids to the primary amine of phosphatidylethanolamine (PE), forming N-acylphosphatidylethanolamine (NAPE), which serves as precursor for N-acylethanolamines (NAEs). Exhibits high N-acyltransferase activity and low phospholipase A1/2 activity. Required for complete organelle rupture and degradation that occur during eye lens terminal differentiation, when fiber cells that compose the lens degrade all membrane-bound organelles in order to provide lens with transparency to allow the passage of light. Organelle membrane degradation is probably catalyzed by the phospholipase activity. Its function is as follows. (Microbial infection) Acts as a host factor for picornaviruses: required during early infection to promote viral genome release into the cytoplasm. This is Phospholipase A and acyltransferase 3 from Mus musculus (Mouse).